Reading from the N-terminus, the 763-residue chain is MPPIPSLWIRVFFSWLLLSLPAAAAADFSHCGGCDDGDGGGGIWSTDNILQCQRVSDFLIAMAYFSIPLELLYFATCSDLFPLKWIVLQFGAFIVLCGLTHLITMFTYEPHSFHVVLALTVAKFLTALVSFATAITLLTLIPQLLRVKVRENFLRIKARELDREVGMMKRQEEASWHVRMLTHEIRKSLDRHTILYTTMVELSKTLELQNCAVWMPSESGSEMILTHQLRQMETEDSNSLSIAMDNPDVLEIKATKDAKVLAADSALGIASRGKLEAGPVAAIRMPMLKASNFKGGTPEVMETSYAILVLVLPEDGSLGWGEEELEIVEVVADQVAVALSHAAVLEESQLIREKLAAQHRDLLRAKHETTMATEARNSFQTAMYDGMRRPMHSILGLVSMMQQENMNPEQRLVMDAIVKTSSVASTLMNDVMQTSTVNREYLSLVRRAFNLHLLVKEAISVVRCLTGCKGIDFEFEVDNSLPERVVGDEKRVFHIVLHMVGTLIQRCNAGCLSLYVNTYNEKEERHNQDWMLRRANFSGSYVCVKFEIRIRESRGNLLSSSSSRRLQGPNSTSSEMGLSFNMCKKIVQMMNGNIWSVSDSKGLGETIMLALQFQLQHVTPVSGASSDLFRSAPIPNFNGLQVILVDSDDTNRAVTHKLLEKLGCLVLSVTSGIQCINSFASAESSFQLVVLDLTMRTMDGFDVALAIRKFRGNCWPPLIVALAASTDDTVRDRCQQAGINGLIQKPVTLAALGDELYRVLQNN.

The next 3 helical transmembrane spans lie at 58 to 78 (FLIA…ATCS), 86 to 106 (IVLQ…ITMF), and 115 to 135 (VVLA…ATAI). Cu cation-binding residues include cysteine 97 and histidine 101. The region spanning 190–339 (DRHTILYTTM…VVADQVAVAL (150 aa)) is the GAF domain. The Histidine kinase domain maps to 382-615 (AMYDGMRRPM…TIMLALQFQL (234 aa)). The Response regulatory domain occupies 641 to 760 (QVILVDSDDT…ALGDELYRVL (120 aa)). Aspartate 692 is subject to 4-aspartylphosphate.

It belongs to the ethylene receptor family. The cofactor is Cu cation. In terms of tissue distribution, expressed in anthers and hulls.

It is found in the endoplasmic reticulum membrane. The catalysed reaction is ATP + protein L-histidine = ADP + protein N-phospho-L-histidine.. In terms of biological role, ethylene receptor related to bacterial two-component regulators. Acts as a negative regulator of ethylene signaling. May delay the transition from the vegetative stage to the floral stage by up-regulating GI (GIGANTEA) and RCN1 and cause starch accumulation in stems by down-regulating the alpha-amylase AMY3D. The sequence is that of Ethylene receptor 2 from Oryza sativa subsp. indica (Rice).